Consider the following 171-residue polypeptide: Peptidyl-prolyl cis-trans isomerase 7 (171 aa).

Positions 7–170 constitute a PPIase cyclophilin-type domain; sequence FFDITIAGKP…SECLIADCGQ (164 aa).

Belongs to the cyclophilin-type PPIase family.

It catalyses the reaction [protein]-peptidylproline (omega=180) = [protein]-peptidylproline (omega=0). In terms of biological role, PPIases accelerate the folding of proteins. It catalyzes the cis-trans isomerization of proline imidic peptide bonds in oligopeptides. This chain is Peptidyl-prolyl cis-trans isomerase 7 (cyn-7), found in Caenorhabditis elegans.